A 251-amino-acid polypeptide reads, in one-letter code: Ubiquinone/menaquinone biosynthesis C-methyltransferase UbiE (251 aa).

S-adenosyl-L-methionine is bound by residues Thr-74, Asp-95, and 123 to 124 (NA).

Belongs to the class I-like SAM-binding methyltransferase superfamily. MenG/UbiE family.

The enzyme catalyses a 2-demethylmenaquinol + S-adenosyl-L-methionine = a menaquinol + S-adenosyl-L-homocysteine + H(+). The catalysed reaction is a 2-methoxy-6-(all-trans-polyprenyl)benzene-1,4-diol + S-adenosyl-L-methionine = a 5-methoxy-2-methyl-3-(all-trans-polyprenyl)benzene-1,4-diol + S-adenosyl-L-homocysteine + H(+). It functions in the pathway quinol/quinone metabolism; menaquinone biosynthesis; menaquinol from 1,4-dihydroxy-2-naphthoate: step 2/2. The protein operates within cofactor biosynthesis; ubiquinone biosynthesis. Methyltransferase required for the conversion of demethylmenaquinol (DMKH2) to menaquinol (MKH2) and the conversion of 2-polyprenyl-6-methoxy-1,4-benzoquinol (DDMQH2) to 2-polyprenyl-3-methyl-6-methoxy-1,4-benzoquinol (DMQH2). This Shewanella pealeana (strain ATCC 700345 / ANG-SQ1) protein is Ubiquinone/menaquinone biosynthesis C-methyltransferase UbiE.